Consider the following 339-residue polypeptide: Thymidine kinase (339 aa).

An ATP-binding site is contributed by 11 to 18 (GAFGIGKT). Glutamate 39 (proton acceptor) is an active-site residue. Substrate is bound by residues tyrosine 59 and glutamine 83. Arginine 176 is an ATP binding site. Residue arginine 182 coordinates substrate.

This sequence belongs to the herpesviridae thymidine kinase family. As to quaternary structure, homodimer.

It carries out the reaction thymidine + ATP = dTMP + ADP + H(+). Its function is as follows. Catalyzes the transfer of the gamma-phospho group of ATP to thymidine to generate dTMP in the salvage pathway of pyrimidine synthesis. The dTMP serves as a substrate for DNA polymerase during viral DNA replication. Allows the virus to be reactivated and to grow in non-proliferative cells lacking a high concentration of phosphorylated nucleic acid precursors. This is Thymidine kinase from Amazona oratrix (yellow-headed parrot).